We begin with the raw amino-acid sequence, 547 residues long: Threonine synthase (547 aa).

Lys117 bears the N6-(pyridoxal phosphate)lysine mark. Positions 272, 273, 274, 276, and 471 each coordinate pyridoxal 5'-phosphate.

The protein belongs to the threonine synthase family. Pyridoxal 5'-phosphate serves as cofactor.

The catalysed reaction is O-phospho-L-homoserine + H2O = L-threonine + phosphate. The protein operates within amino-acid biosynthesis; L-threonine biosynthesis; L-threonine from L-aspartate: step 5/5. Catalyzes the gamma-elimination of phosphate from L-phosphohomoserine and the beta-addition of water to produce L-threonine. The protein is Threonine synthase of Cryptococcus neoformans var. grubii serotype A (strain H99 / ATCC 208821 / CBS 10515 / FGSC 9487) (Filobasidiella neoformans var. grubii).